Here is a 453-residue protein sequence, read N- to C-terminus: Chromosomal replication initiator protein DnaA (453 aa).

A domain I, interacts with DnaA modulators region spans residues 1–73 (MELSPQDLWT…ADVVEEILGY (73 aa)). The tract at residues 73-110 (YSIDIQLTSTQGENIAIVGETQVSAYYPTLSGEHPKPI) is domain II. The tract at residues 111-327 (KLNPKYTFSR…GALIRAITYI (217 aa)) is domain III, AAA+ region. Residues glycine 155, glycine 157, lysine 158, and threonine 159 each coordinate ATP. The segment at 328–453 (SISGLSMTVE…HLASRTQKTT (126 aa)) is domain IV, binds dsDNA.

The protein belongs to the DnaA family. Oligomerizes as a right-handed, spiral filament on DNA at oriC.

The protein localises to the cytoplasm. In terms of biological role, plays an essential role in the initiation and regulation of chromosomal replication. ATP-DnaA binds to the origin of replication (oriC) to initiate formation of the DNA replication initiation complex once per cell cycle. Binds the DnaA box (a 9 base pair repeat at the origin) and separates the double-stranded (ds)DNA. Forms a right-handed helical filament on oriC DNA; dsDNA binds to the exterior of the filament while single-stranded (ss)DNA is stabiized in the filament's interior. The ATP-DnaA-oriC complex binds and stabilizes one strand of the AT-rich DNA unwinding element (DUE), permitting loading of DNA polymerase. After initiation quickly degrades to an ADP-DnaA complex that is not apt for DNA replication. Binds acidic phospholipids. In Gloeothece citriformis (strain PCC 7424) (Cyanothece sp. (strain PCC 7424)), this protein is Chromosomal replication initiator protein DnaA.